A 285-amino-acid polypeptide reads, in one-letter code: Ribosomal RNA small subunit methyltransferase A (285 aa).

Residues histidine 27, leucine 29, glycine 54, glutamate 75, aspartate 100, and asparagine 120 each coordinate S-adenosyl-L-methionine.

The protein belongs to the class I-like SAM-binding methyltransferase superfamily. rRNA adenine N(6)-methyltransferase family. RsmA subfamily.

The protein localises to the cytoplasm. The catalysed reaction is adenosine(1518)/adenosine(1519) in 16S rRNA + 4 S-adenosyl-L-methionine = N(6)-dimethyladenosine(1518)/N(6)-dimethyladenosine(1519) in 16S rRNA + 4 S-adenosyl-L-homocysteine + 4 H(+). Specifically dimethylates two adjacent adenosines (A1518 and A1519) in the loop of a conserved hairpin near the 3'-end of 16S rRNA in the 30S particle. May play a critical role in biogenesis of 30S subunits. The chain is Ribosomal RNA small subunit methyltransferase A from Phenylobacterium zucineum (strain HLK1).